The primary structure comprises 371 residues: GTPase Obg (371 aa).

In terms of domain architecture, Obg spans 1-159; it reads MKFLDQAKVY…KTIWLRLKLI (159 aa). The OBG-type G domain maps to 160 to 327; it reads ADAGLVGLPN…VLRALRDIIV (168 aa). GTP is bound by residues 166 to 173, 191 to 195, 212 to 215, 279 to 282, and 308 to 310; these read GLPNAGKS, FTTLH, DIPG, SQID, and SAI. Positions 173 and 193 each coordinate Mg(2+). The disordered stretch occupies residues 337–371; the sequence is APMKALKVRHRDMQSSGNEGESEDNSDRDDEEQQG. The segment covering 356–371 has biased composition (acidic residues); it reads GESEDNSDRDDEEQQG.

This sequence belongs to the TRAFAC class OBG-HflX-like GTPase superfamily. OBG GTPase family. In terms of assembly, monomer. Requires Mg(2+) as cofactor.

It is found in the cytoplasm. In terms of biological role, an essential GTPase which binds GTP, GDP and possibly (p)ppGpp with moderate affinity, with high nucleotide exchange rates and a fairly low GTP hydrolysis rate. Plays a role in control of the cell cycle, stress response, ribosome biogenesis and in those bacteria that undergo differentiation, in morphogenesis control. This is GTPase Obg from Rhizobium rhizogenes (strain K84 / ATCC BAA-868) (Agrobacterium radiobacter).